A 545-amino-acid polypeptide reads, in one-letter code: Glucose-6-phosphate isomerase 1 (545 aa).

The Proton donor role is filled by glutamate 356. Catalysis depends on residues histidine 387 and lysine 508.

This sequence belongs to the GPI family.

The protein localises to the cytoplasm. It carries out the reaction alpha-D-glucose 6-phosphate = beta-D-fructose 6-phosphate. Its pathway is carbohydrate biosynthesis; gluconeogenesis. It functions in the pathway carbohydrate degradation; glycolysis; D-glyceraldehyde 3-phosphate and glycerone phosphate from D-glucose: step 2/4. In terms of biological role, catalyzes the reversible isomerization of glucose-6-phosphate to fructose-6-phosphate. In Cupriavidus pinatubonensis (strain JMP 134 / LMG 1197) (Cupriavidus necator (strain JMP 134)), this protein is Glucose-6-phosphate isomerase 1.